The following is a 300-amino-acid chain: Hemagglutinin 1 (300 aa).

Residues Phe-200–Asp-221 form a helical membrane-spanning segment.

It localises to the cell membrane. Induces agglutination of neuraminidase-treated erythrocytes. This chain is Hemagglutinin 1 (hag1), found in Eikenella corrodens.